A 732-amino-acid polypeptide reads, in one-letter code: Acylamino-acid-releasing enzyme (732 aa).

N-acetylmethionine is present on Met1. Ser187 carries the post-translational modification Phosphoserine. Catalysis depends on charge relay system residues Ser587, Asp675, and His707.

It belongs to the peptidase S9C family. Homotetramer. As to expression, expressed in the liver (at protein level).

It localises to the cytoplasm. It carries out the reaction Cleavage of an N-acetyl or N-formyl amino acid from the N-terminus of a polypeptide.. Its activity is regulated as follows. Homotetramerization is required for activity. Tetramerization results in the formation of a gated channel which is involved in substrate selection and substrate access to the catalytic sites. Its function is as follows. This enzyme catalyzes the hydrolysis of the N-terminal peptide bond of an N-acetylated peptide to generate an N-acetylated amino acid and a peptide with a free N-terminus. It preferentially cleaves off Ac-Ala, Ac-Met and Ac-Ser. Also, involved in the degradation of oxidized and glycated proteins. The protein is Acylamino-acid-releasing enzyme (APEH) of Sus scrofa (Pig).